Consider the following 331-residue polypeptide: 6-phosphogluconolactonase (331 aa).

K287 carries the post-translational modification N6-acetyllysine.

It belongs to the cycloisomerase 2 family.

The catalysed reaction is 6-phospho-D-glucono-1,5-lactone + H2O = 6-phospho-D-gluconate + H(+). It participates in carbohydrate degradation; pentose phosphate pathway; D-ribulose 5-phosphate from D-glucose 6-phosphate (oxidative stage): step 2/3. Catalyzes the hydrolysis of 6-phosphogluconolactone to 6-phosphogluconate. The polypeptide is 6-phosphogluconolactonase (Escherichia coli O6:K15:H31 (strain 536 / UPEC)).